The sequence spans 119 residues: SGSCEVKTCWKAMPPFRKVGNVLKEKFDGATEVEQRKIGSTKVLVPKNSQFKPHTDEDLVYLDSSPDFCDHDLKNGVLGTSGRHCNKTSKAIDGCELMCCGRGFHTDEVEVVERCSCKF.

S1 is lipidated: O-palmitoleoyl serine; by PORCN. Cystine bridges form between C69–C100 and C85–C95. A glycan (N-linked (GlcNAc...) asparagine) is linked at N86.

This sequence belongs to the Wnt family. In terms of processing, palmitoleoylation is required for efficient binding to frizzled receptors. Depalmitoleoylation leads to Wnt signaling pathway inhibition.

It is found in the secreted. The protein resides in the extracellular space. It localises to the extracellular matrix. Functionally, ligand for members of the frizzled family of seven transmembrane receptors. Plays an important role in embryonic development. This chain is Protein Wnt-4 (WNT-4), found in Plestiodon skiltonianus (Western skink).